The primary structure comprises 137 residues: 3-hydroxyacyl-[acyl-carrier-protein] dehydratase FabZ (137 aa).

Histidine 46 is a catalytic residue.

This sequence belongs to the thioester dehydratase family. FabZ subfamily.

The protein localises to the cytoplasm. It carries out the reaction a (3R)-hydroxyacyl-[ACP] = a (2E)-enoyl-[ACP] + H2O. In terms of biological role, involved in unsaturated fatty acids biosynthesis. Catalyzes the dehydration of short chain beta-hydroxyacyl-ACPs and long chain saturated and unsaturated beta-hydroxyacyl-ACPs. The protein is 3-hydroxyacyl-[acyl-carrier-protein] dehydratase FabZ of Thermotoga maritima (strain ATCC 43589 / DSM 3109 / JCM 10099 / NBRC 100826 / MSB8).